The primary structure comprises 122 residues: Large ribosomal subunit protein uL14 (122 aa).

This sequence belongs to the universal ribosomal protein uL14 family. Part of the 50S ribosomal subunit. Forms a cluster with proteins L3 and L19. In the 70S ribosome, L14 and L19 interact and together make contacts with the 16S rRNA in bridges B5 and B8.

Functionally, binds to 23S rRNA. Forms part of two intersubunit bridges in the 70S ribosome. The chain is Large ribosomal subunit protein uL14 from Psychrobacter sp. (strain PRwf-1).